A 157-amino-acid chain; its full sequence is Transcription elongation factor GreA (157 aa).

It belongs to the GreA/GreB family.

In terms of biological role, necessary for efficient RNA polymerase transcription elongation past template-encoded arresting sites. The arresting sites in DNA have the property of trapping a certain fraction of elongating RNA polymerases that pass through, resulting in locked ternary complexes. Cleavage of the nascent transcript by cleavage factors such as GreA or GreB allows the resumption of elongation from the new 3'terminus. GreA releases sequences of 2 to 3 nucleotides. In Mesorhizobium japonicum (strain LMG 29417 / CECT 9101 / MAFF 303099) (Mesorhizobium loti (strain MAFF 303099)), this protein is Transcription elongation factor GreA.